The sequence spans 318 residues: tRNA U34 carboxymethyltransferase (318 aa).

Residues Lys88, Trp102, Lys107, Gly126, Met192, Tyr196, and Arg311 each coordinate carboxy-S-adenosyl-L-methionine.

Belongs to the class I-like SAM-binding methyltransferase superfamily. CmoB family. As to quaternary structure, homotetramer.

The enzyme catalyses carboxy-S-adenosyl-L-methionine + 5-hydroxyuridine(34) in tRNA = 5-carboxymethoxyuridine(34) in tRNA + S-adenosyl-L-homocysteine + H(+). Its function is as follows. Catalyzes carboxymethyl transfer from carboxy-S-adenosyl-L-methionine (Cx-SAM) to 5-hydroxyuridine (ho5U) to form 5-carboxymethoxyuridine (cmo5U) at position 34 in tRNAs. The polypeptide is tRNA U34 carboxymethyltransferase (Pseudomonas fluorescens (strain ATCC BAA-477 / NRRL B-23932 / Pf-5)).